A 276-amino-acid chain; its full sequence is Acyl-[acyl-carrier-protein]--UDP-N-acetylglucosamine O-acyltransferase (276 aa).

It belongs to the transferase hexapeptide repeat family. LpxA subfamily. As to quaternary structure, homotrimer.

It is found in the cytoplasm. The enzyme catalyses a (3R)-hydroxyacyl-[ACP] + UDP-N-acetyl-alpha-D-glucosamine = a UDP-3-O-[(3R)-3-hydroxyacyl]-N-acetyl-alpha-D-glucosamine + holo-[ACP]. Its pathway is glycolipid biosynthesis; lipid IV(A) biosynthesis; lipid IV(A) from (3R)-3-hydroxytetradecanoyl-[acyl-carrier-protein] and UDP-N-acetyl-alpha-D-glucosamine: step 1/6. Its function is as follows. Involved in the biosynthesis of lipid A, a phosphorylated glycolipid that anchors the lipopolysaccharide to the outer membrane of the cell. The chain is Acyl-[acyl-carrier-protein]--UDP-N-acetylglucosamine O-acyltransferase from Gloeothece citriformis (strain PCC 7424) (Cyanothece sp. (strain PCC 7424)).